The chain runs to 555 residues: CTP synthase (555 aa).

The tract at residues 1–265 (MTRYIFITGG…GNRVCEKLNI (265 aa)) is amidoligase domain. Position 13 (serine 13) interacts with CTP. Serine 13 contacts UTP. ATP-binding positions include 14-19 (SLGKGI) and aspartate 71. Residues aspartate 71 and glutamate 139 each contribute to the Mg(2+) site. Residues 146–148 (DIE), 186–191 (KTKPTQ), and lysine 222 contribute to the CTP site. Residues 186–191 (KTKPTQ) and lysine 222 each bind UTP. Residues 290 to 541 (TVAVVGKYVD…IKAGLAAKEA (252 aa)) form the Glutamine amidotransferase type-1 domain. Glycine 351 serves as a coordination point for L-glutamine. Cysteine 378 functions as the Nucleophile; for glutamine hydrolysis in the catalytic mechanism. L-glutamine-binding positions include 379–382 (LGMQ), glutamate 402, and arginine 469. Residues histidine 514 and glutamate 516 contribute to the active site.

It belongs to the CTP synthase family. Homotetramer.

The catalysed reaction is UTP + L-glutamine + ATP + H2O = CTP + L-glutamate + ADP + phosphate + 2 H(+). It carries out the reaction L-glutamine + H2O = L-glutamate + NH4(+). It catalyses the reaction UTP + NH4(+) + ATP = CTP + ADP + phosphate + 2 H(+). Its pathway is pyrimidine metabolism; CTP biosynthesis via de novo pathway; CTP from UDP: step 2/2. With respect to regulation, allosterically activated by GTP, when glutamine is the substrate; GTP has no effect on the reaction when ammonia is the substrate. The allosteric effector GTP functions by stabilizing the protein conformation that binds the tetrahedral intermediate(s) formed during glutamine hydrolysis. Inhibited by the product CTP, via allosteric rather than competitive inhibition. Catalyzes the ATP-dependent amination of UTP to CTP with either L-glutamine or ammonia as the source of nitrogen. Regulates intracellular CTP levels through interactions with the four ribonucleotide triphosphates. The protein is CTP synthase of Coxiella burnetii (strain RSA 331 / Henzerling II).